The following is a 229-amino-acid chain: Enolase-phosphatase E1 (229 aa).

The tract at residues 206-229 (DRDPASHHPQVQRFDDIHPEQIPA) is disordered. Residues 218–229 (RFDDIHPEQIPA) show a composition bias toward basic and acidic residues.

Belongs to the HAD-like hydrolase superfamily. MasA/MtnC family. In terms of assembly, monomer. Mg(2+) serves as cofactor.

The enzyme catalyses 5-methylsulfanyl-2,3-dioxopentyl phosphate + H2O = 1,2-dihydroxy-5-(methylsulfanyl)pent-1-en-3-one + phosphate. The protein operates within amino-acid biosynthesis; L-methionine biosynthesis via salvage pathway; L-methionine from S-methyl-5-thio-alpha-D-ribose 1-phosphate: step 3/6. Its pathway is amino-acid biosynthesis; L-methionine biosynthesis via salvage pathway; L-methionine from S-methyl-5-thio-alpha-D-ribose 1-phosphate: step 4/6. Bifunctional enzyme that catalyzes the enolization of 2,3-diketo-5-methylthiopentyl-1-phosphate (DK-MTP-1-P) into the intermediate 2-hydroxy-3-keto-5-methylthiopentenyl-1-phosphate (HK-MTPenyl-1-P), which is then dephosphorylated to form the acireductone 1,2-dihydroxy-3-keto-5-methylthiopentene (DHK-MTPene). The chain is Enolase-phosphatase E1 from Klebsiella oxytoca.